A 517-amino-acid chain; its full sequence is Peptide chain release factor 3 (517 aa).

The tr-type G domain occupies 9-269 (AKRRTFAIIS…DFVEHAPAPR (261 aa)). Residues 18–25 (SHPDAGKT), 86–90 (DTPGH), and 140–143 (NKLD) contribute to the GTP site.

The protein belongs to the TRAFAC class translation factor GTPase superfamily. Classic translation factor GTPase family. PrfC subfamily.

The protein localises to the cytoplasm. Increases the formation of ribosomal termination complexes and stimulates activities of RF-1 and RF-2. It binds guanine nucleotides and has strong preference for UGA stop codons. It may interact directly with the ribosome. The stimulation of RF-1 and RF-2 is significantly reduced by GTP and GDP, but not by GMP. This Halorhodospira halophila (strain DSM 244 / SL1) (Ectothiorhodospira halophila (strain DSM 244 / SL1)) protein is Peptide chain release factor 3.